Here is a 165-residue protein sequence, read N- to C-terminus: Small ribosomal subunit protein uS5 (165 aa).

Residues 10-73 form the S5 DRBM domain; the sequence is LVEKLVAVDR…EAARRNMITV (64 aa).

Belongs to the universal ribosomal protein uS5 family. As to quaternary structure, part of the 30S ribosomal subunit. Contacts proteins S4 and S8.

In terms of biological role, with S4 and S12 plays an important role in translational accuracy. Its function is as follows. Located at the back of the 30S subunit body where it stabilizes the conformation of the head with respect to the body. The polypeptide is Small ribosomal subunit protein uS5 (Acinetobacter baylyi (strain ATCC 33305 / BD413 / ADP1)).